We begin with the raw amino-acid sequence, 906 residues long: Protein translocase subunit SecA (906 aa).

Residues Gln-86, 104 to 108 (GEGKT), and Asp-511 each bind ATP. Basic and acidic residues-rich tracts occupy residues 853-865 (HESVIDNNQRHDE) and 877-888 (VRREGPKVKRND). The interval 853-906 (HESVIDNNQRHDEDEQEEAPKVQQVRREGPKVKRNDPCPCGSGKKYKQCHSKVE) is disordered. Residues Cys-890, Cys-892, Cys-901, and His-902 each contribute to the Zn(2+) site. Over residues 896–906 (KKYKQCHSKVE) the composition is skewed to basic residues.

It belongs to the SecA family. In terms of assembly, monomer and homodimer. Part of the essential Sec protein translocation apparatus which comprises SecA, SecYEG and auxiliary proteins SecDF-YajC and YidC. Zn(2+) serves as cofactor.

The protein localises to the cell inner membrane. Its subcellular location is the cytoplasm. It carries out the reaction ATP + H2O + cellular proteinSide 1 = ADP + phosphate + cellular proteinSide 2.. Part of the Sec protein translocase complex. Interacts with the SecYEG preprotein conducting channel. Has a central role in coupling the hydrolysis of ATP to the transfer of proteins into and across the cell membrane, serving both as a receptor for the preprotein-SecB complex and as an ATP-driven molecular motor driving the stepwise translocation of polypeptide chains across the membrane. The polypeptide is Protein translocase subunit SecA (Francisella tularensis subsp. tularensis (strain WY96-3418)).